We begin with the raw amino-acid sequence, 417 residues long: MLTKAPRGTKDVLPSESYKWQYVENLMREICEFYGYKEIRTPGFEHTELFLRGVGESTDIVRKEMYTFNDRSGRSITLKAEGTSPAVRAFIEHGLYAETQPTKLYYITPVYRYEKPQAGRLREHHQFGVEIFGAKSASADAEVISIAMTLLKKLGLNNLELRINSVGCPVCRKNYNKVLKEFLKEHLDELCDDCKVRYEVNPLRVLDCKVESCRRVTGEAPLITDYLCDDCRNHFEELKKYLDAMGYDYIVDPRIVRGLDYYTKTAFEIISKDIGAQGTVCGGGRYDGLIEECGGPSMPGVGFGMGIERLLLTLEQNGIEIPKPEGPDLFIAYIGDEAKLFTFTLANKLRFNGLKVEIDHMERSLKAQMKYANKLNAKFAVVIGEEELESKKVKLKNMATGEETEILIDEIEKAIKN.

This sequence belongs to the class-II aminoacyl-tRNA synthetase family. As to quaternary structure, homodimer.

It is found in the cytoplasm. The enzyme catalyses tRNA(His) + L-histidine + ATP = L-histidyl-tRNA(His) + AMP + diphosphate + H(+). This chain is Histidine--tRNA ligase, found in Caldanaerobacter subterraneus subsp. tengcongensis (strain DSM 15242 / JCM 11007 / NBRC 100824 / MB4) (Thermoanaerobacter tengcongensis).